The primary structure comprises 196 residues: MLIGWRAVPRRHGGELPRRGALALGCIALLLMGIVGCTTVTDGTAMPDTNVAPAYRSSVSASVSASAATSSIRESQRQQSLTTKAIRTSCDALAATSKDAIDKVNAYVAAFNQGRNTGPTEGPAIDALNNSASTVSGSLSAALSAQLGDALNAYVDAARAVANAIGAHASTAEFNRRVDRLNDTKTKALTMCVAAF.

A helical transmembrane segment spans residues 20-40 (GALALGCIALLLMGIVGCTTV).

Its subcellular location is the membrane. This is an uncharacterized protein from Mycobacterium tuberculosis (strain CDC 1551 / Oshkosh).